A 305-amino-acid chain; its full sequence is tRNA pseudouridine synthase B (305 aa).

Catalysis depends on Asp50, which acts as the Nucleophile.

The protein belongs to the pseudouridine synthase TruB family. Type 1 subfamily.

The catalysed reaction is uridine(55) in tRNA = pseudouridine(55) in tRNA. In terms of biological role, responsible for synthesis of pseudouridine from uracil-55 in the psi GC loop of transfer RNAs. This chain is tRNA pseudouridine synthase B, found in Rhodococcus jostii (strain RHA1).